Here is a 293-residue protein sequence, read N- to C-terminus: 33 kDa chaperonin (293 aa).

2 disulfide bridges follow: Cys-230-Cys-232 and Cys-263-Cys-266.

This sequence belongs to the HSP33 family. Post-translationally, under oxidizing conditions two disulfide bonds are formed involving the reactive cysteines. Under reducing conditions zinc is bound to the reactive cysteines and the protein is inactive.

The protein resides in the cytoplasm. In terms of biological role, redox regulated molecular chaperone. Protects both thermally unfolding and oxidatively damaged proteins from irreversible aggregation. Plays an important role in the bacterial defense system toward oxidative stress. In Edwardsiella ictaluri (strain 93-146), this protein is 33 kDa chaperonin.